Consider the following 74-residue polypeptide: Cytochrome c oxidase subunit 6C (74 aa).

Residues 2–12 (STALAKPQMRG) lie on the Mitochondrial matrix side of the membrane. The chain crosses the membrane as a helical span at residues 13–53 (LLARRLRFHIVGAFMVSLGFATFYKFAVAEKRKKAYADFYR). Topologically, residues 54–74 (NYDSMKDFEEMRKAGIFQSAK) are mitochondrial intermembrane.

Belongs to the cytochrome c oxidase subunit 6c family. In terms of assembly, component of the cytochrome c oxidase (complex IV, CIV), a multisubunit enzyme composed of 14 subunits. The complex is composed of a catalytic core of 3 subunits MT-CO1, MT-CO2 and MT-CO3, encoded in the mitochondrial DNA, and 11 supernumerary subunits COX4I1 (or COX4I2), COX5A, COX5B, COX6A2 (or COX6A1), COX6B1 (or COX6B2), COX6C, COX7A1 (or COX7A2), COX7B, COX7C, COX8B and NDUFA4, which are encoded in the nuclear genome. The complex exists as a monomer or a dimer and forms supercomplexes (SCs) in the inner mitochondrial membrane with NADH-ubiquinone oxidoreductase (complex I, CI) and ubiquinol-cytochrome c oxidoreductase (cytochrome b-c1 complex, complex III, CIII), resulting in different assemblies (supercomplex SCI(1)III(2)IV(1) and megacomplex MCI(2)III(2)IV(2)).

The protein resides in the mitochondrion inner membrane. It participates in energy metabolism; oxidative phosphorylation. In terms of biological role, component of the cytochrome c oxidase, the last enzyme in the mitochondrial electron transport chain which drives oxidative phosphorylation. The respiratory chain contains 3 multisubunit complexes succinate dehydrogenase (complex II, CII), ubiquinol-cytochrome c oxidoreductase (cytochrome b-c1 complex, complex III, CIII) and cytochrome c oxidase (complex IV, CIV), that cooperate to transfer electrons derived from NADH and succinate to molecular oxygen, creating an electrochemical gradient over the inner membrane that drives transmembrane transport and the ATP synthase. Cytochrome c oxidase is the component of the respiratory chain that catalyzes the reduction of oxygen to water. Electrons originating from reduced cytochrome c in the intermembrane space (IMS) are transferred via the dinuclear copper A center (CU(A)) of subunit 2 and heme A of subunit 1 to the active site in subunit 1, a binuclear center (BNC) formed by heme A3 and copper B (CU(B)). The BNC reduces molecular oxygen to 2 water molecules using 4 electrons from cytochrome c in the IMS and 4 protons from the mitochondrial matrix. The sequence is that of Cytochrome c oxidase subunit 6C (COX6C) from Bos taurus (Bovine).